The following is a 162-amino-acid chain: Endoribonuclease YbeY (162 aa).

Residues His-127, His-131, and His-137 each contribute to the Zn(2+) site.

This sequence belongs to the endoribonuclease YbeY family. Requires Zn(2+) as cofactor.

It is found in the cytoplasm. Functionally, single strand-specific metallo-endoribonuclease involved in late-stage 70S ribosome quality control and in maturation of the 3' terminus of the 16S rRNA. This chain is Endoribonuclease YbeY, found in Acetivibrio thermocellus (strain ATCC 27405 / DSM 1237 / JCM 9322 / NBRC 103400 / NCIMB 10682 / NRRL B-4536 / VPI 7372) (Clostridium thermocellum).